Consider the following 196-residue polypeptide: Peptidyl-tRNA hydrolase (196 aa).

H15 contributes to the tRNA binding site. Catalysis depends on H20, which acts as the Proton acceptor. The tRNA site is built by Y66, N68, and N114.

The protein belongs to the PTH family. As to quaternary structure, monomer.

The protein localises to the cytoplasm. The enzyme catalyses an N-acyl-L-alpha-aminoacyl-tRNA + H2O = an N-acyl-L-amino acid + a tRNA + H(+). Its function is as follows. Hydrolyzes ribosome-free peptidyl-tRNAs (with 1 or more amino acids incorporated), which drop off the ribosome during protein synthesis, or as a result of ribosome stalling. In terms of biological role, catalyzes the release of premature peptidyl moieties from peptidyl-tRNA molecules trapped in stalled 50S ribosomal subunits, and thus maintains levels of free tRNAs and 50S ribosomes. The chain is Peptidyl-tRNA hydrolase from Polynucleobacter asymbioticus (strain DSM 18221 / CIP 109841 / QLW-P1DMWA-1) (Polynucleobacter necessarius subsp. asymbioticus).